The chain runs to 138 residues: Small ribosomal subunit protein uS11c (138 aa).

The tract at residues M1 to G22 is disordered. Residues G9–G22 are compositionally biased toward basic residues.

The protein belongs to the universal ribosomal protein uS11 family. Part of the 30S ribosomal subunit.

It localises to the plastid. The protein resides in the chloroplast. The polypeptide is Small ribosomal subunit protein uS11c (Piper cenocladum (Ant piper)).